A 720-amino-acid polypeptide reads, in one-letter code: Putative glutamine--fructose-6-phosphate aminotransferase [isomerizing] (720 aa).

The Nucleophile; for GATase activity role is filled by Cys2. Positions 2–321 (CGIFGYCNFL…DNDIAHIYDG (320 aa)) constitute a Glutamine amidotransferase type-2 domain. The span at 266 to 280 (STTSTFNHGSSTETP) shows a compositional bias: polar residues. The interval 266 to 285 (STTSTFNHGSSTETPAENGL) is disordered. 2 SIS domains span residues 393 to 532 (WLTE…DLVS) and 565 to 710 (CDKK…VDLP).

The catalysed reaction is D-fructose 6-phosphate + L-glutamine = D-glucosamine 6-phosphate + L-glutamate. It participates in nucleotide-sugar biosynthesis; UDP-N-acetyl-alpha-D-glucosamine biosynthesis; alpha-D-glucosamine 6-phosphate from D-fructose 6-phosphate: step 1/1. In terms of biological role, involved in amino sugar synthesis (formation of chitin, supplies the amino sugars of asparagine-linked oligosaccharides of glycoproteins). This is Putative glutamine--fructose-6-phosphate aminotransferase [isomerizing] from Saccharomyces cerevisiae (strain RM11-1a) (Baker's yeast).